The sequence spans 122 residues: V-type ATPase assembly factor PKR1 (122 aa).

Residues 1–20 (MANFFVRLWESVFEPGTSPQ) are Cytoplasmic-facing. The helical transmembrane segment at 21 to 41 (LIIATHVSFVALLLTLIWLIY) threads the bilayer. Residues 42 to 46 (ATNGN) lie on the Lumenal side of the membrane. Residues 47-67 (IHFYALFCISLLLWITVIWFI) traverse the membrane as a helical segment. The Cytoplasmic portion of the chain corresponds to 68-122 (NELSHVKLKDNDELDKDANKKDDSAIKEDSEDKQESGKSTSTARRTQAQSRSRKA). Residues 82-103 (DKDANKKDDSAIKEDSEDKQES) show a composition bias toward basic and acidic residues. The tract at residues 82–122 (DKDANKKDDSAIKEDSEDKQESGKSTSTARRTQAQSRSRKA) is disordered. A compositionally biased stretch (polar residues) spans 104 to 122 (GKSTSTARRTQAQSRSRKA).

It belongs to the PKR1 family.

It is found in the endoplasmic reticulum membrane. Functionally, functions together with the other V-type ATPase assembly factors in the endoplasmic reticulum to efficiently assemble the V-type ATPase membrane sector V(0). The protein is V-type ATPase assembly factor PKR1 (PKR1) of Saccharomyces cerevisiae (strain ATCC 204508 / S288c) (Baker's yeast).